The sequence spans 545 residues: MAKEIFFSDEARNKLYEGVKKLNDAVKVTMGPRGRNVLIQKSFGAPTITKDGVSVAKEVELKDSLENMGASLVREVASKTADQAGDGTTTATVLAHAIFKEGLRNITAGANPIEVKRGMDKACEAIVAELKKLSREVKDKKEIAQVATISANSDEKIGNLIADAMEKVGKDGVITVEEAKSINDELNVVEGMQFDRGYLSPYFITNTEKMTAELQNPFILLFDKKIANLKDLLPILEQIQKTGKPLLIIAEDIEGEALATLVVNKLRGVLNISAVKAPGFGDRRKAMLEDIAILTGGEVISEELGRTLESASIQDLGQASSVIIDKDNTTIVNGAGEKANINARINQIKAQIAETSSDYDREKLQERLAKLSGGVAVIKVGAATETEMKEKKDRVDDALSATKAAVEEGIVIGGGAALIKAKSKISLNLQGDEAIGAAIVERALRAPLRQIAENAGFDAGVVVNTVENSKEENTGFDAAKGEYVNMLESGIIDPVKVERVALLNAVSVASMLLTTEATISEIKEDKPAMPDMSGMGGMGGMGGMM.

ATP-binding positions include 29 to 32 (TMGP), K50, 86 to 90 (DGTTT), G414, 477 to 479 (DAA), and D493.

It belongs to the chaperonin (HSP60) family. In terms of assembly, forms a cylinder of 14 subunits composed of two heptameric rings stacked back-to-back. Interacts with the co-chaperonin GroES.

The protein resides in the cytoplasm. It carries out the reaction ATP + H2O + a folded polypeptide = ADP + phosphate + an unfolded polypeptide.. In terms of biological role, together with its co-chaperonin GroES, plays an essential role in assisting protein folding. The GroEL-GroES system forms a nano-cage that allows encapsulation of the non-native substrate proteins and provides a physical environment optimized to promote and accelerate protein folding. This is Chaperonin GroEL from Campylobacter lari (strain RM2100 / D67 / ATCC BAA-1060).